Reading from the N-terminus, the 37-residue chain is Large ribosomal subunit protein bL36 (37 aa).

The protein belongs to the bacterial ribosomal protein bL36 family.

The sequence is that of Large ribosomal subunit protein bL36 from Maridesulfovibrio salexigens (strain ATCC 14822 / DSM 2638 / NCIMB 8403 / VKM B-1763) (Desulfovibrio salexigens).